The following is a 130-amino-acid chain: Methylglyoxal synthase (130 aa).

An MGS-like domain is found at 1–130 (MSKPRIALIA…DLARNMQDVC (130 aa)). Substrate contacts are provided by residues histidine 11, lysine 15, 37–40 (TGTT), and 57–58 (SG). Aspartate 63 (proton donor/acceptor) is an active-site residue. Position 90 (histidine 90) interacts with substrate.

It belongs to the methylglyoxal synthase family.

The enzyme catalyses dihydroxyacetone phosphate = methylglyoxal + phosphate. In terms of biological role, catalyzes the formation of methylglyoxal from dihydroxyacetone phosphate. This Burkholderia orbicola (strain AU 1054) protein is Methylglyoxal synthase.